We begin with the raw amino-acid sequence, 187 residues long: MKAFLVALLISIELALVFAGCPTIISKNRWGGQQARKVEPTTKPLKYVIINHTSGPSCVDEIDCSRMLVYIQNRHMNHLNYNDIGCNFIIGGDGQIYEGAGWQAAASHTPGWNKKSLLIGFIGDYEINRPSLKQLEAGKQLIECAVERGEIEQDYKLVGARTIRQTNSPGKYLFRELQSWKGFTRDP.

The signal sequence occupies residues 1 to 19 (MKAFLVALLISIELALVFA). 2 disulfide bridges follow: Cys-21–Cys-144 and Cys-58–Cys-64. An N-acetylmuramoyl-L-alanine amidase domain is found at 43–170 (KPLKYVIINH…RTIRQTNSPG (128 aa)). An N-linked (GlcNAc...) asparagine glycan is attached at Asn-51.

The protein belongs to the N-acetylmuramoyl-L-alanine amidase 2 family.

The protein localises to the secreted. Peptidoglycan-recognition protein probably involved in innate immunity by binding to peptidoglycans (PGN) of bacteria and activating the prophenoloxidase (proPO) cascade immune response. Binds to 1,3-beta-D-glucan and PGN. The polypeptide is Peptidoglycan-recognition protein 3 (PGRP-3) (Holotrichia diomphalia (Korean black chafer)).